Here is a 161-residue protein sequence, read N- to C-terminus: Regulator of ribonuclease activity A (161 aa).

Belongs to the RraA family. Homotrimer. Binds to both RNA-binding sites in the C-terminal region of Rne and to RhlB.

It localises to the cytoplasm. Globally modulates RNA abundance by binding to RNase E (Rne) and regulating its endonucleolytic activity. Can modulate Rne action in a substrate-dependent manner by altering the composition of the degradosome. Modulates RNA-binding and helicase activities of the degradosome. This chain is Regulator of ribonuclease activity A, found in Citrobacter koseri (strain ATCC BAA-895 / CDC 4225-83 / SGSC4696).